The sequence spans 429 residues: Keratin, type I cytoskeletal 18 (429 aa).

Residues 2 to 78 (SYSRSVYSSS…NVNLIGGGQN (77 aa)) form a head region. The interval 79-114 (EKETMQDLNDRLASYLERVRSLEAANKKLEVQIRQH) is coil 1A. One can recognise an IF rod domain in the interval 79-389 (EKETMQDLND…RLLEGDGSFD (311 aa)). The tract at residues 115-130 (TEKKGPSKDWSPYYKT) is linker 1. The segment at 131–222 (IEDLRKQVFD…KNHQDDVTEL (92 aa)) is coil 1B. Residues 223 to 246 (QAQVARSAVTVEVDAPKSQDLGKI) are linker 12. The tract at residues 247-385 (MTELRAQYDG…HTYRRLLEGD (139 aa)) is coil 2. The segment at 386-429 (GSFDLQDAVPTVTTQTVKKVITTTQRIVDGKVVSESNDTEVLKS) is tail.

It belongs to the intermediate filament family. Heterotetramer of two type I and two type II keratins. Keratin-18 associates with keratin-8. Post-translationally, phosphorylated. In terms of processing, proteolytically cleaved by caspases during epithelial cell apoptosis.

Functionally, when phosphorylated, plays a role in filament reorganization. The chain is Keratin, type I cytoskeletal 18 from Xenopus tropicalis (Western clawed frog).